A 302-amino-acid polypeptide reads, in one-letter code: Putative S-adenosyl-L-methionine-dependent methyltransferase MAB_4586c (302 aa).

Residues aspartate 122 and 151–152 (DL) contribute to the S-adenosyl-L-methionine site.

Belongs to the UPF0677 family.

Its function is as follows. Exhibits S-adenosyl-L-methionine-dependent methyltransferase activity. The protein is Putative S-adenosyl-L-methionine-dependent methyltransferase MAB_4586c of Mycobacteroides abscessus (strain ATCC 19977 / DSM 44196 / CCUG 20993 / CIP 104536 / JCM 13569 / NCTC 13031 / TMC 1543 / L948) (Mycobacterium abscessus).